The primary structure comprises 118 residues: Large ribosomal subunit protein bL20 (118 aa).

It belongs to the bacterial ribosomal protein bL20 family.

Its function is as follows. Binds directly to 23S ribosomal RNA and is necessary for the in vitro assembly process of the 50S ribosomal subunit. It is not involved in the protein synthesizing functions of that subunit. The protein is Large ribosomal subunit protein bL20 of Hahella chejuensis (strain KCTC 2396).